Consider the following 170-residue polypeptide: Small ribosomal subunit protein bS18c (170 aa).

Positions Met1–Arg61 are disordered. Polar residues predominate over residues Gln13–Lys26. Residues Gln27–Arg55 are compositionally biased toward basic residues.

It belongs to the bacterial ribosomal protein bS18 family. As to quaternary structure, part of the 30S ribosomal subunit.

It localises to the plastid. It is found in the chloroplast. This Hordeum vulgare (Barley) protein is Small ribosomal subunit protein bS18c.